Consider the following 477-residue polypeptide: UDP-N-acetylmuramate--L-alanine ligase (477 aa).

Residue 115–121 coordinates ATP; it reads GTHGKTT.

It belongs to the MurCDEF family.

The protein resides in the cytoplasm. The enzyme catalyses UDP-N-acetyl-alpha-D-muramate + L-alanine + ATP = UDP-N-acetyl-alpha-D-muramoyl-L-alanine + ADP + phosphate + H(+). Its pathway is cell wall biogenesis; peptidoglycan biosynthesis. Its function is as follows. Cell wall formation. The protein is UDP-N-acetylmuramate--L-alanine ligase of Gluconobacter oxydans (strain 621H) (Gluconobacter suboxydans).